A 182-amino-acid chain; its full sequence is uncharacterized protein (182 aa).

The N-terminal stretch at 1–26 is a signal peptide; sequence MIRALCTIVLIAAGVAVALYLSLVYG. The disordered stretch occupies residues 68–90; that stretch reads YTERPYPVSSTQSPTTTQSPTTT. Over residues 74 to 90 the composition is skewed to low complexity; sequence PVSSTQSPTTTQSPTTT.

This is an uncharacterized protein from Dryophytes versicolor (chameleon treefrog).